The following is a 29-amino-acid chain: Bacteriocin (29 aa).

Its subcellular location is the secreted. Functionally, has antibacterial activity against strains of L.monocytogenes, L.lactis, B.subtilis, S.typhi, S.aureus, C.perfringens, E.aerogenes and M.luteus but not against E.coli, S.sonnei, S.pneumoniae, S.faecalis, P.aeruginosa, K.pneumoniae or P.vulgaris. This Lactococcus lactis subsp. lactis (Streptococcus lactis) protein is Bacteriocin.